Here is a 374-residue protein sequence, read N- to C-terminus: Chaperone protein DnaJ (374 aa).

Residues 5–70 (CYYEILNVSK…GKRSRYDQFG (66 aa)) form the J domain. A CR-type zinc finger spans residues 130-207 (GVEKEINIPR…CYGSGKIKKQ (78 aa)). Positions 143, 146, 159, 162, 181, 184, 195, and 198 each coordinate Zn(2+). CXXCXGXG motif repeat units lie at residues 143–150 (CDSCDGTG), 159–166 (CHACHGQG), 181–188 (CPVCNGTG), and 195–202 (CDDCYGSG).

The protein belongs to the DnaJ family. As to quaternary structure, homodimer. Zn(2+) is required as a cofactor.

It localises to the cytoplasm. Participates actively in the response to hyperosmotic and heat shock by preventing the aggregation of stress-denatured proteins and by disaggregating proteins, also in an autonomous, DnaK-independent fashion. Unfolded proteins bind initially to DnaJ; upon interaction with the DnaJ-bound protein, DnaK hydrolyzes its bound ATP, resulting in the formation of a stable complex. GrpE releases ADP from DnaK; ATP binding to DnaK triggers the release of the substrate protein, thus completing the reaction cycle. Several rounds of ATP-dependent interactions between DnaJ, DnaK and GrpE are required for fully efficient folding. Also involved, together with DnaK and GrpE, in the DNA replication of plasmids through activation of initiation proteins. The chain is Chaperone protein DnaJ from Francisella philomiragia subsp. philomiragia (strain ATCC 25017 / CCUG 19701 / FSC 153 / O#319-036).